The chain runs to 398 residues: CCA-adding enzyme (398 aa).

ATP contacts are provided by Gly32 and Arg35. Positions 32 and 35 each coordinate CTP. 2 residues coordinate Mg(2+): Asp45 and Asp47. 5 residues coordinate ATP: Arg116, Asp159, Arg162, Arg165, and Arg168. CTP contacts are provided by Arg116, Asp159, Arg162, Arg165, and Arg168.

It belongs to the tRNA nucleotidyltransferase/poly(A) polymerase family. Bacterial CCA-adding enzyme type 3 subfamily. As to quaternary structure, homodimer. Requires Mg(2+) as cofactor.

The catalysed reaction is a tRNA precursor + 2 CTP + ATP = a tRNA with a 3' CCA end + 3 diphosphate. It catalyses the reaction a tRNA with a 3' CCA end + 2 CTP + ATP = a tRNA with a 3' CCACCA end + 3 diphosphate. Catalyzes the addition and repair of the essential 3'-terminal CCA sequence in tRNAs without using a nucleic acid template. Adds these three nucleotides in the order of C, C, and A to the tRNA nucleotide-73, using CTP and ATP as substrates and producing inorganic pyrophosphate. tRNA 3'-terminal CCA addition is required both for tRNA processing and repair. Also involved in tRNA surveillance by mediating tandem CCA addition to generate a CCACCA at the 3' terminus of unstable tRNAs. While stable tRNAs receive only 3'-terminal CCA, unstable tRNAs are marked with CCACCA and rapidly degraded. The sequence is that of CCA-adding enzyme from Lactobacillus gasseri (strain ATCC 33323 / DSM 20243 / BCRC 14619 / CIP 102991 / JCM 1131 / KCTC 3163 / NCIMB 11718 / NCTC 13722 / AM63).